The sequence spans 359 residues: UDP-2-acetamido-2-deoxy-3-oxo-D-glucuronate aminotransferase (359 aa).

UDP-2-acetamido-2-deoxy-alpha-D-ribo-hex-3-uluronate contacts are provided by glycine 29, tyrosine 31, and serine 184. N6-(pyridoxal phosphate)lysine is present on lysine 185. UDP-2-acetamido-2-deoxy-alpha-D-ribo-hex-3-uluronate contacts are provided by arginine 229, histidine 308, and tyrosine 309.

The protein belongs to the DegT/DnrJ/EryC1 family. In terms of assembly, homodimer. Pyridoxal 5'-phosphate is required as a cofactor.

It catalyses the reaction UDP-2-acetamido-2-deoxy-alpha-D-ribo-hex-3-uluronate + L-glutamate = UDP-2-acetamido-3-amino-2,3-dideoxy-alpha-D-glucuronate + 2-oxoglutarate. The protein operates within bacterial outer membrane biogenesis; LPS O-antigen biosynthesis. Functionally, plays a role in the biosynthesis of B-band O antigen for serotype O5. Catalyzes the amination of UDP-2-acetamido-2-deoxy-3-oxo-D-glucuronic acid (UDP-3-oxo-D-GlcNAcA) to UDP-2-acetamido-3-amino-2,3-dideoxy-D-glucuronic acid (UDP-GlcNAc3NA), using L-glutamate as the preferred amine donor. The protein is UDP-2-acetamido-2-deoxy-3-oxo-D-glucuronate aminotransferase of Pseudomonas aeruginosa (strain ATCC 15692 / DSM 22644 / CIP 104116 / JCM 14847 / LMG 12228 / 1C / PRS 101 / PAO1).